A 340-amino-acid chain; its full sequence is Probable serine acetyltransferase 5 (340 aa).

2 stretches are compositionally biased toward low complexity: residues 1–17 (MLVV…RVAA) and 54–64 (PAEVVPAFAPP). The tract at residues 1–67 (MLVVVARKSS…VPAFAPPESE (67 aa)) is disordered.

Belongs to the transferase hexapeptide repeat family. In terms of assembly, homomultimer.

It carries out the reaction L-serine + acetyl-CoA = O-acetyl-L-serine + CoA. It functions in the pathway amino-acid biosynthesis; L-cysteine biosynthesis; L-cysteine from L-serine: step 1/2. The chain is Probable serine acetyltransferase 5 (SAT5) from Oryza sativa subsp. japonica (Rice).